The sequence spans 164 residues: uncharacterized protein (164 aa).

The helical transmembrane segment at 46-66 threads the bilayer; sequence FIRPNIYLIIFIIIVLLLLYY. Residues 72–137 are a coiled coil; sequence KADKEKEKLE…YNLNKENLRE (66 aa). Residues 76 to 91 are compositionally biased toward basic and acidic residues; that stretch reads EKEKLEDTDKEFDKST. The disordered stretch occupies residues 76-114; it reads EKEKLEDTDKEFDKSTNNDTNSKKIYHRQKNSKTLNSSK.

It localises to the membrane. This is an uncharacterized protein from Acanthamoeba polyphaga mimivirus (APMV).